The primary structure comprises 199 residues: MQIKPFEENKPYPEWDPDEPDKVPGIPNWNRNFGNIIIEFDKGTRTCYYHRKKKNKYDVECGDYRIKITYSQKNWNKKVVYDNDAWKWLVDCLDPTEINKFLCHLCKILDMNIDKDVYDYLINNVNFSVNNNDLRALLYYFWHRAIIEDRIYSQKKGYNGRKQVIGATYEVLKELRNNQNRVYLYEKCDEIYKMAKKKL.

This is an uncharacterized protein from Methanocaldococcus jannaschii (strain ATCC 43067 / DSM 2661 / JAL-1 / JCM 10045 / NBRC 100440) (Methanococcus jannaschii).